The following is a 148-amino-acid chain: Large ribosomal subunit protein uL15 (148 aa).

The span at 1–30 (MSTHKKKTRKLRGHVSHGHGRIGKHRKHPG) shows a compositional bias: basic residues. A disordered region spans residues 1–37 (MSTHKKKTRKLRGHVSHGHGRIGKHRKHPGGRGNAGG).

The protein belongs to the universal ribosomal protein uL15 family.

The sequence is that of Large ribosomal subunit protein uL15 (RpL27A) from Tenebrio molitor (Yellow mealworm beetle).